Consider the following 226-residue polypeptide: Cytidylate kinase (226 aa).

10–18 (GPASSGKST) contributes to the ATP binding site.

The protein belongs to the cytidylate kinase family. Type 1 subfamily.

The protein resides in the cytoplasm. The enzyme catalyses CMP + ATP = CDP + ADP. It catalyses the reaction dCMP + ATP = dCDP + ADP. The polypeptide is Cytidylate kinase (Streptococcus equi subsp. equi (strain 4047)).